Consider the following 276-residue polypeptide: MPWHARLQLNYTREHARTVARFEHHGPLRVLQSLYPEGGGICHNVLVHPPGGLVGGDQLDIRASVGPGAHALITSAGATRFYRSMGAPVLQRTCLSLAPGARLEWLPLEALCYNACNAENRLTLTLAPGAECMGADVTALGLPHAGQPFVAGRFVQHIEIPGLWREHGVIDATDQRLLRSPLGLAGHCCMASLFFGAGSALSQARRDSALDAARAVIDAHALKTTAGATSPCDQVLVLRLLAPQVEPAMQLLRQVRAAWRAALWQLDAEPPRIWAM.

Belongs to the UreD family. In terms of assembly, ureD, UreF and UreG form a complex that acts as a GTP-hydrolysis-dependent molecular chaperone, activating the urease apoprotein by helping to assemble the nickel containing metallocenter of UreC. The UreE protein probably delivers the nickel.

It localises to the cytoplasm. Functionally, required for maturation of urease via the functional incorporation of the urease nickel metallocenter. The protein is Urease accessory protein UreD of Verminephrobacter eiseniae (strain EF01-2).